The chain runs to 553 residues: Zinc finger protein with KRAB and SCAN domains 3 (553 aa).

Residues 28–49 (EQEESSPLAEETSWLGSPGPDR) form a disordered region. Residues serine 33 and serine 44 each carry the phosphoserine modification. The region spanning 51–133 (RQRFRAFRYP…ALLEYLDRQL (83 aa)) is the SCAN box domain. Threonine 136 is subject to Phosphothreonine. Lysine 176 participates in a covalent cross-link: Glycyl lysine isopeptide (Lys-Gly) (interchain with G-Cter in SUMO2). A Phosphothreonine modification is found at threonine 206. The KRAB domain maps to 213–273 (LKMEDVAPVL…RAEEYRDQKP (61 aa)). At serine 223 the chain carries Phosphoserine. C2H2-type zinc fingers lie at residues 313 to 335 (FYCR…KRIH), 341 to 363 (YECE…QRVH), 369 to 391 (YECE…QRTH), 397 to 419 (YECD…HRIH), and 425 to 447 (YQCN…QRTH). Position 448 is a phosphothreonine (threonine 448). C2H2-type zinc fingers lie at residues 479–501 (YQCN…QKVH) and 507–529 (FECQ…QRRH).

It belongs to the krueppel C2H2-type zinc-finger protein family. In terms of tissue distribution, expressed in heart, brain, spleen, lung, liver, skeletal muscle, kidney and testis.

Its subcellular location is the nucleus. It localises to the cytoplasm. Functionally, transcriptional factor that binds to the consensus sequence 5'-[GT][AG][AGT]GGGG-3' and acts as a repressor of autophagy. Specifically represses expression of genes involved in autophagy and lysosome biogenesis/function such as MAP1LC3B, ULK1 or WIPI2. Associates with chromatin at the ITGB4 and VEGF promoters. This Mus musculus (Mouse) protein is Zinc finger protein with KRAB and SCAN domains 3 (Zkscan3).